The sequence spans 209 residues: Pyridoxine/pyridoxamine 5'-phosphate oxidase (209 aa).

FMN is bound by residues 57-62 (RMVLLK), 72-73 (YT), Lys-79, and Gln-101. Substrate is bound at residue Lys-62. Substrate is bound by residues Tyr-119, Arg-123, and Ser-127. Residues 136–137 (QS) and Trp-181 contribute to the FMN site. 187–189 (RLH) is a binding site for substrate. Arg-191 contacts FMN.

Belongs to the pyridoxamine 5'-phosphate oxidase family. Homodimer. The cofactor is FMN.

The enzyme catalyses pyridoxamine 5'-phosphate + O2 + H2O = pyridoxal 5'-phosphate + H2O2 + NH4(+). The catalysed reaction is pyridoxine 5'-phosphate + O2 = pyridoxal 5'-phosphate + H2O2. It participates in cofactor metabolism; pyridoxal 5'-phosphate salvage; pyridoxal 5'-phosphate from pyridoxamine 5'-phosphate: step 1/1. It functions in the pathway cofactor metabolism; pyridoxal 5'-phosphate salvage; pyridoxal 5'-phosphate from pyridoxine 5'-phosphate: step 1/1. Its function is as follows. Catalyzes the oxidation of either pyridoxine 5'-phosphate (PNP) or pyridoxamine 5'-phosphate (PMP) into pyridoxal 5'-phosphate (PLP). This is Pyridoxine/pyridoxamine 5'-phosphate oxidase from Chelativorans sp. (strain BNC1).